Here is a 262-residue protein sequence, read N- to C-terminus: Hemin import ATP-binding protein HmuV (262 aa).

In terms of domain architecture, ABC transporter spans 1–247 (MRNLTLQRGR…ERIKQIFAFD (247 aa)). 31–38 (GPNGTGKS) contacts ATP.

Belongs to the ABC transporter superfamily. Heme (hemin) importer (TC 3.A.1.14.5) family. As to quaternary structure, the complex is composed of two ATP-binding proteins (HmuV), two transmembrane proteins (HmuU) and a solute-binding protein (HmuT).

It is found in the cell inner membrane. Its function is as follows. Part of the ABC transporter complex HmuTUV involved in hemin import. Responsible for energy coupling to the transport system. This Plesiomonas shigelloides (Aeromonas shigelloides) protein is Hemin import ATP-binding protein HmuV.